The primary structure comprises 312 residues: 2-phospho-L-lactate transferase (312 aa).

The 7,8-didemethyl-8-hydroxy-5-deazariboflavin site is built by D50 and K89.

Belongs to the CofD family. In terms of assembly, homodimer. It depends on Mg(2+) as a cofactor.

It carries out the reaction (2S)-lactyl-2-diphospho-5'-guanosine + 7,8-didemethyl-8-hydroxy-5-deazariboflavin = oxidized coenzyme F420-0 + GMP + H(+). Its pathway is cofactor biosynthesis; coenzyme F420 biosynthesis. Catalyzes the transfer of the 2-phospholactate moiety from (2S)-lactyl-2-diphospho-5'-guanosine to 7,8-didemethyl-8-hydroxy-5-deazariboflavin (FO) with the formation of oxidized coenzyme F420-0 and GMP. The chain is 2-phospho-L-lactate transferase from Methanococcus vannielii (strain ATCC 35089 / DSM 1224 / JCM 13029 / OCM 148 / SB).